We begin with the raw amino-acid sequence, 253 residues long: Sulfate transporter CysZ (253 aa).

The next 4 membrane-spanning stretches (helical) occupy residues 31–51, 75–95, 151–171, and 222–242; these read FVILPLLVNILLMGGAFWWLF, LLWPLAVISVLLVFGYFFSTI, IVLLILYFIPGIGQTVAPVLW, and IPLLNLFIMPVAVCGATAMWV.

This sequence belongs to the CysZ family.

The protein resides in the cell inner membrane. Its function is as follows. High affinity, high specificity proton-dependent sulfate transporter, which mediates sulfate uptake. Provides the sulfur source for the cysteine synthesis pathway. In Shigella flexneri, this protein is Sulfate transporter CysZ.